The sequence spans 469 residues: Desmin (469 aa).

Residues 2–107 form a head region; it reads SQAYSSSQRV…QEFLTTRTNE (106 aa). Position 7 is a phosphoserine; by CDK1 (Ser-7). At Ser-12 the chain carries Phosphoserine; by AURKB. Arg-16 is modified (omega-N-methylarginine). Thr-17 is modified (phosphothreonine; by AURKB and ROCK1). Ser-28 and Ser-32 each carry phosphoserine; by CDK1. At Arg-37 the chain carries Asymmetric dimethylarginine; alternate. Arg-37 carries the post-translational modification Omega-N-methylarginine; alternate. Ser-45 carries the post-translational modification Phosphoserine. Arg-58 is modified (ADP-ribosylarginine). Ser-60 bears the Phosphoserine; by AURKB mark. Position 70 is an omega-N-methylarginine (Arg-70). The residue at position 76 (Thr-76) is a Phosphothreonine; by ROCK1. Phosphoserine is present on Ser-81. One can recognise an IF rod domain in the interval 107 to 415; sequence EKVELQELND…KLLEGEESRI (309 aa). The segment at 108–140 is coil 1A; it reads KVELQELNDRFANYIEKVRFLEQQNAALAAEVN. The tract at residues 141–150 is linker 1; the sequence is RLKGREPTRV. Residues 151-251 form a coil 1B region; sequence AEIYEEELRE…HEEEIRELQA (101 aa). The linker 12 stretch occupies residues 252 to 267; sequence QLQEQQVQVEMDMSKP. Residues 267 to 414 form an interaction with NEB region; sequence PDLTAALRDI…RKLLEGEESR (148 aa). A coil 2A region spans residues 268-286; the sequence is DLTAALRDIRAQYETIAAK. Residues 287-294 are linker 2; sequence NISEAEEW. A phosphoserine mark is found at Ser-289, Ser-357, Ser-360, and Ser-423. Residues 295–411 form a coil 2B region; that stretch reads YKSKVSDLTQ…ATYRKLLEGE (117 aa). Residues 412-469 form a tail region; sequence ESRINLPIQTYSALNFRETSPEQRGSEVHTKKTVMIKTIETRDGEVVSEATQQQHEVL. The interval 437–452 is interaction with CRYAB; it reads SEVHTKKTVMIKTIET.

Belongs to the intermediate filament family. As to quaternary structure, homomer. Interacts with DST. Interacts with MTM1. Interacts with EPPK1; interaction is dependent of higher-order structure of intermediate filament. Interacts with CRYAB. Interacts with NEB (via nebulin repeats 160-164). Interacts (via rod region) with NEBL (via nebulin repeats 1-5). Interacts with ASB2; the interaction targets DES for proteasomal degradation. Interacts with PKP1. Interacts with FLII. Post-translationally, ADP-ribosylation prevents ability to form intermediate filaments. Phosphorylation at Ser-7, Ser-28 and Ser-32 by CDK1, phosphorylation at Ser-60 by AURKB and phosphorylation at Thr-76 by ROCK1 contribute to efficient separation of desmin intermediate filaments during mitosis. In terms of processing, ubiquitination by a SCF-like complex containing ASB2 leads to proteasomal degradation.

It localises to the cytoplasm. It is found in the myofibril. Its subcellular location is the sarcomere. The protein resides in the z line. The protein localises to the cell membrane. It localises to the sarcolemma. It is found in the nucleus. Its subcellular location is the cell tip. The protein resides in the nucleus envelope. In terms of biological role, muscle-specific type III intermediate filament essential for proper muscular structure and function. Plays a crucial role in maintaining the structure of sarcomeres, inter-connecting the Z-disks and forming the myofibrils, linking them not only to the sarcolemmal cytoskeleton, but also to the nucleus and mitochondria, thus providing strength for the muscle fiber during activity. In adult striated muscle they form a fibrous network connecting myofibrils to each other and to the plasma membrane from the periphery of the Z-line structures. May act as a sarcomeric microtubule-anchoring protein: specifically associates with detyrosinated tubulin-alpha chains, leading to buckled microtubules and mechanical resistance to contraction. Required for nuclear membrane integrity, via anchoring at the cell tip and nuclear envelope, resulting in maintenance of microtubule-derived intracellular mechanical forces. Contributes to the transcriptional regulation of the NKX2-5 gene in cardiac progenitor cells during a short period of cardiomyogenesis and in cardiac side population stem cells in the adult. Plays a role in maintaining an optimal conformation of nebulette (NEB) on heart muscle sarcomeres to bind and recruit cardiac alpha-actin. In Canis lupus familiaris (Dog), this protein is Desmin (DES).